The primary structure comprises 339 residues: tRNA N6-adenosine threonylcarbamoyltransferase (339 aa).

Fe cation contacts are provided by His112 and His116. Substrate-binding positions include 135–139 (LVSGG), Asp168, Gly181, and Asn273. Asp301 lines the Fe cation pocket.

The protein belongs to the KAE1 / TsaD family. The cofactor is Fe(2+).

Its subcellular location is the cytoplasm. The enzyme catalyses L-threonylcarbamoyladenylate + adenosine(37) in tRNA = N(6)-L-threonylcarbamoyladenosine(37) in tRNA + AMP + H(+). In terms of biological role, required for the formation of a threonylcarbamoyl group on adenosine at position 37 (t(6)A37) in tRNAs that read codons beginning with adenine. Is involved in the transfer of the threonylcarbamoyl moiety of threonylcarbamoyl-AMP (TC-AMP) to the N6 group of A37, together with TsaE and TsaB. TsaD likely plays a direct catalytic role in this reaction. This Coxiella burnetii (strain RSA 493 / Nine Mile phase I) protein is tRNA N6-adenosine threonylcarbamoyltransferase.